Consider the following 368-residue polypeptide: Heme A synthase (368 aa).

Transmembrane regions (helical) follow at residues 14–34 (AVRIWLTLVAALIAVMVLVGG), 104–124 (VIGIVYLLPFLWFLWRGAIGP), 129–149 (ALWIIFALGALQGAVGWWMVA), 161–181 (VRLATHLSLALIIYAAIVWTL), and 200–220 (ALALLGLTFVQLYAGALVAGL). His264 lines the heme pocket. The next 3 membrane-spanning stretches (helical) occupy residues 266–283 (MLAYALWTLAALHMIDAL), 296–316 (FLALTAQATLGIFTVLYAAPI), and 318–338 (LALVHQAMALVVLTLAVLQAE). His322 contributes to the heme binding site.

The protein belongs to the COX15/CtaA family. Type 2 subfamily. As to quaternary structure, interacts with CtaB. It depends on heme b as a cofactor.

It localises to the cell membrane. The catalysed reaction is Fe(II)-heme o + 2 A + H2O = Fe(II)-heme a + 2 AH2. It functions in the pathway porphyrin-containing compound metabolism; heme A biosynthesis; heme A from heme O: step 1/1. Functionally, catalyzes the conversion of heme O to heme A by two successive hydroxylations of the methyl group at C8. The first hydroxylation forms heme I, the second hydroxylation results in an unstable dihydroxymethyl group, which spontaneously dehydrates, resulting in the formyl group of heme A. This Rhodopseudomonas palustris (strain ATCC BAA-98 / CGA009) protein is Heme A synthase.